The following is a 122-amino-acid chain: Large ribosomal subunit protein uL29A (122 aa).

The stretch at 10-69 forms a coiled coil; the sequence is QLGIKQIEERAAEIKADLAALRQKKNSGDVGANDIKTAKKNLARALTVRREKILEELVEA.

It belongs to the universal ribosomal protein uL29 family. Component of the large ribosomal subunit.

The protein resides in the cytoplasm. The protein is Large ribosomal subunit protein uL29A (RPL35A) of Encephalitozoon cuniculi (strain GB-M1) (Microsporidian parasite).